Reading from the N-terminus, the 752-residue chain is Catalase-peroxidase (752 aa).

A disordered region spans residues 1–21 (MSNESKCPFHQTAGGGTTNRD). The segment at residues 91 to 245 (WHSAGTYRIG…LAAVQMGLIY (155 aa)) is a cross-link (tryptophyl-tyrosyl-methioninium (Trp-Tyr) (with M-271)). His92 (proton acceptor) is an active-site residue. Positions 204-228 (QAPGQGDLVAEPAKHGEEQNRDLSA) are disordered. The span at 215–228 (PAKHGEEQNRDLSA) shows a compositional bias: basic and acidic residues. The tryptophyl-tyrosyl-methioninium (Tyr-Met) (with W-91) cross-link spans 245-271 (YVNPEGPEGNPDPVASGKDIRETFGRM). Heme is bound at residue His286. The segment at 366–391 (AHQWQPKEGKGAGTVPDAHDPSKRHA) is disordered.

The protein belongs to the peroxidase family. Peroxidase/catalase subfamily. Homodimer or homotetramer. Heme b serves as cofactor. Post-translationally, formation of the three residue Trp-Tyr-Met cross-link is important for the catalase, but not the peroxidase activity of the enzyme.

The catalysed reaction is H2O2 + AH2 = A + 2 H2O. It catalyses the reaction 2 H2O2 = O2 + 2 H2O. Functionally, bifunctional enzyme with both catalase and broad-spectrum peroxidase activity. The chain is Catalase-peroxidase from Pseudomonas putida (strain W619).